The following is a 529-amino-acid chain: Tyrosine--tRNA ligase, cytoplasmic (529 aa).

Tyrosine 39 is a binding site for L-tyrosine. The 'HIGH' region motif lies at 44–52 (TTGKPHVAY). Tyrosine 166, glutamine 170, aspartate 173, and glutamine 188 together coordinate L-tyrosine. Residues 222–226 (KMSSS) carry the 'KMSKS' region motif. The Nuclear localization signal signature appears at 242–247 (KKKLKK). A disordered region spans residues 335–362 (KLTSSAYPEPSKNKGGVKGNPKQTTDDD). The tRNA-binding domain occupies 365 to 469 (IPSRLDIRVG…EGSAAGDRVY (105 aa)).

This sequence belongs to the class-I aminoacyl-tRNA synthetase family. Homodimer.

Its subcellular location is the cytoplasm. The protein localises to the nucleus. The enzyme catalyses tRNA(Tyr) + L-tyrosine + ATP = L-tyrosyl-tRNA(Tyr) + AMP + diphosphate + H(+). Catalyzes the attachment of tyrosine to tRNA(Tyr) in a two-step reaction: tyrosine is first activated by ATP to form Tyr-AMP and then transferred to the acceptor end of tRNA(Tyr). The sequence is that of Tyrosine--tRNA ligase, cytoplasmic (yars1) from Danio rerio (Zebrafish).